A 381-amino-acid chain; its full sequence is Curved DNA-binding protein (381 aa).

Ser8 bears the Phosphoserine mark. At Thr362 the chain carries Phosphothreonine. Positions 368–375 (KNKKKSKK) match the Nuclear localization signal motif.

Belongs to the peptidase M24 family.

Its subcellular location is the nucleus. Functionally, a non-essential protein that preferentially binds curved DNA. Binds non-curved DNA with a much lower affinity. The protein is Curved DNA-binding protein (cdb4) of Schizosaccharomyces pombe (strain 972 / ATCC 24843) (Fission yeast).